Reading from the N-terminus, the 96-residue chain is Prokineticin Bv8-like peptide 2 (96 aa).

The N-terminal stretch at 1–19 (MKCFAQIVVLLLVIAFSHG) is a signal peptide. 5 cysteine pairs are disulfide-bonded: Cys-26/Cys-38, Cys-32/Cys-50, Cys-37/Cys-78, Cys-60/Cys-86, and Cys-80/Cys-95.

Belongs to the AVIT (prokineticin) family. As to expression, expressed by the skin glands.

It is found in the secreted. Its function is as follows. Potent agonist for both PKR1/PROKR1 and PKR2/PROKR2, and inducer of a potent and long-lasting hyperalgesia. Also potentiates capsaicin-induced TRPV1 current when tested on DRG neurons. At subnanomolar concentrations, this protein both induces potent chemotaxis of macrophages and stimulates LPS-induced production of the pro-inflammatory cytokines IL-1 and IL-12. In vivo, potently stimulates the contraction of the guinea-pig gastrointestinal (GI) smooth muscle (nanomolar concentration) and rabbit aortic rings. This is Prokineticin Bv8-like peptide 2 from Bombina maxima (Giant fire-bellied toad).